Reading from the N-terminus, the 275-residue chain is 2,3,4,5-tetrahydropyridine-2,6-dicarboxylate N-succinyltransferase (275 aa).

Residues arginine 105 and aspartate 142 each contribute to the substrate site.

It belongs to the transferase hexapeptide repeat family. As to quaternary structure, homotrimer.

Its subcellular location is the cytoplasm. It catalyses the reaction (S)-2,3,4,5-tetrahydrodipicolinate + succinyl-CoA + H2O = (S)-2-succinylamino-6-oxoheptanedioate + CoA. It participates in amino-acid biosynthesis; L-lysine biosynthesis via DAP pathway; LL-2,6-diaminopimelate from (S)-tetrahydrodipicolinate (succinylase route): step 1/3. In Histophilus somni (strain 129Pt) (Haemophilus somnus), this protein is 2,3,4,5-tetrahydropyridine-2,6-dicarboxylate N-succinyltransferase.